Here is a 50-residue protein sequence, read N- to C-terminus: Mast cell degranulating peptide (50 aa).

The first 27 residues, 1 to 27, serve as a signal peptide directing secretion; that stretch reads MISMLRCTFFFLSVILITSYFVTPTMS. Lysine 29 carries the post-translational modification N6-formyllysine; partial. Disulfide bonds link cysteine 30-cysteine 42 and cysteine 32-cysteine 46. Lysine 44 and lysine 48 each carry N6-formyllysine; partial. Asparagine amide is present on asparagine 49.

In terms of tissue distribution, expressed by the venom gland.

It is found in the secreted. Potent anti-inflammatory agent. At low concentrations, mediates the degranulation of mast cells thus evoking an inflammatory response. Also acts as a neurotoxin capable of blocking a class of voltage-gated potassium channels. The sequence is that of Mast cell degranulating peptide from Apis mellifera (Honeybee).